The chain runs to 259 residues: Phosphate import ATP-binding protein PstB (259 aa).

Residues I13 to I254 enclose the ABC transporter domain. Residue G45–S52 participates in ATP binding.

Belongs to the ABC transporter superfamily. Phosphate importer (TC 3.A.1.7) family. As to quaternary structure, the complex is composed of two ATP-binding proteins (PstB), two transmembrane proteins (PstC and PstA) and a solute-binding protein (PstS).

It localises to the cell inner membrane. It catalyses the reaction phosphate(out) + ATP + H2O = ADP + 2 phosphate(in) + H(+). In terms of biological role, part of the ABC transporter complex PstSACB involved in phosphate import. Responsible for energy coupling to the transport system. This Albidiferax ferrireducens (strain ATCC BAA-621 / DSM 15236 / T118) (Rhodoferax ferrireducens) protein is Phosphate import ATP-binding protein PstB.